Reading from the N-terminus, the 142-residue chain is Hemoglobin subunit alpha-1 (142 aa).

The 141-residue stretch at 2 to 142 folds into the Globin domain; it reads KLTAEDKHNV…VAYVLASKYR (141 aa). His59 is an O2 binding site. Heme b is bound at residue His88.

Belongs to the globin family. As to quaternary structure, major hemoglobin is a heterotetramer of two alpha-1 chains and two beta-1 chains. In terms of tissue distribution, red blood cells.

Functionally, involved in oxygen transport from the lung to the various peripheral tissues. The protein is Hemoglobin subunit alpha-1 of Pleurodeles waltl (Iberian ribbed newt).